A 330-amino-acid polypeptide reads, in one-letter code: Taste receptor type 2 member 117 (330 aa).

The Extracellular segment spans residues 1 to 16; sequence MKHFWKILSVISQSTL. The chain crosses the membrane as a helical span at residues 17-37; the sequence is SVILIVELVIGIIGNGFMVLV. Over 38–53 the chain is Cytoplasmic; it reads HCMDWVKKKKMSLVNQ. Residues 54-74 traverse the membrane as a helical segment; that stretch reads ILTALSISRIFQLCLLFISLV. Residues 75-95 lie on the Extracellular side of the membrane; that stretch reads INFSYTDLTTSSRMIQVMYNA. N-linked (GlcNAc...) asparagine glycosylation occurs at Asn-76. Residues 96 to 116 form a helical membrane-spanning segment; sequence WILANHFSIWIATCLTVLYFL. Residues 117 to 135 lie on the Cytoplasmic side of the membrane; that stretch reads KIANFSNSFFLYLKWRVEK. The helical transmembrane segment at 136 to 156 threads the bilayer; the sequence is VVSVTLLVSLLLLILNILLTN. Over 157-190 the chain is Extracellular; sequence LETDMWTNEYQRNISCSFSSHYYAKCHRQVLRLH. Asn-169 is a glycosylation site (N-linked (GlcNAc...) asparagine). A helical membrane pass occupies residues 191-211; that stretch reads IIFLSVPVVLSLSTFLLLIFS. Topologically, residues 212 to 239 are cytoplasmic; sequence LWTHHKRMQQHVQGGRDARTTAHFKALQ. A helical transmembrane segment spans residues 240-260; it reads TVIAFFLLYSIFILSVLIQIW. Over 261–269 the chain is Extracellular; that stretch reads KYELLKKNL. A helical membrane pass occupies residues 270–290; it reads FVVFCEVVYIAFPTFHSYILI. Topologically, residues 291–330 are cytoplasmic; that stretch reads VGDMKLRQACLPLCIIAAEIQTTLCRNFRSLKYFRLCCIF.

This sequence belongs to the G-protein coupled receptor T2R family.

It is found in the membrane. Functionally, putative taste receptor which may play a role in the perception of bitterness. The chain is Taste receptor type 2 member 117 from Mus musculus (Mouse).